The primary structure comprises 743 residues: NAD(P)H-quinone oxidoreductase subunit 5, chloroplastic (743 aa).

A run of 16 helical transmembrane segments spans residues 9 to 29 (WIIPFLPLPVPMLIGVGLLLF), 40 to 60 (WAFQSVLLLSIVMIFSMNLSI), 89 to 109 (IDPLTSIMSILITTVGILVLI), 125 to 145 (FAYMSFFSTSMLGLVTSSNLI), 147 to 167 (IYIFWELVGICSYLLIGFWFT), 185 to 205 (GDFGLLLGILGFYWITGSFEF), 219 to 239 (NEVNFLFVTLCAVLLFAGAIA), 258 to 278 (TPISALIHAATMVAAGIFLVA), 283 to 303 (LFIVIPHIMNFISLIGIITVF), 327 to 347 (LGYMMLALGMGSYRSALFHLI), 354 to 374 (ALLFLGSGSVIHSMETLVGYC), 396 to 416 (ISFLLGTLSLCGIPPLACFWS), 425 to 445 (WLYSPIFAIIAWSTAGLTAFY), 548 to 568 (LFPILILIIFTLFIGFLGIPF), 607 to 627 (VFSVSIASFGIFIAFFLYKPV), and 723 to 743 (YLFFYFSYVSICLLSYYFFNL).

It belongs to the complex I subunit 5 family. In terms of assembly, NDH is composed of at least 16 different subunits, 5 of which are encoded in the nucleus.

The protein localises to the plastid. It is found in the chloroplast thylakoid membrane. The enzyme catalyses a plastoquinone + NADH + (n+1) H(+)(in) = a plastoquinol + NAD(+) + n H(+)(out). The catalysed reaction is a plastoquinone + NADPH + (n+1) H(+)(in) = a plastoquinol + NADP(+) + n H(+)(out). NDH shuttles electrons from NAD(P)H:plastoquinone, via FMN and iron-sulfur (Fe-S) centers, to quinones in the photosynthetic chain and possibly in a chloroplast respiratory chain. The immediate electron acceptor for the enzyme in this species is believed to be plastoquinone. Couples the redox reaction to proton translocation, and thus conserves the redox energy in a proton gradient. The chain is NAD(P)H-quinone oxidoreductase subunit 5, chloroplastic (ndhF) from Carthamus tinctorius (Safflower).